The primary structure comprises 239 residues: Small ribosomal subunit protein uS3 (239 aa).

The region spanning 39–107 (VRQVLRKKMS…PVHINVIEVR (69 aa)) is the KH type-2 domain. The segment at 214 to 239 (SQEKQDDGSRGDRNADRSSRRSREVR) is disordered. A compositionally biased stretch (basic and acidic residues) spans 216–239 (EKQDDGSRGDRNADRSSRRSREVR).

The protein belongs to the universal ribosomal protein uS3 family. In terms of assembly, part of the 30S ribosomal subunit. Forms a tight complex with proteins S10 and S14.

Binds the lower part of the 30S subunit head. Binds mRNA in the 70S ribosome, positioning it for translation. This is Small ribosomal subunit protein uS3 from Xylella fastidiosa (strain M23).